The chain runs to 716 residues: Polyribonucleotide nucleotidyltransferase (716 aa).

Residues Asp-495 and Asp-501 each contribute to the Mg(2+) site. The 60-residue stretch at 562-621 folds into the KH domain; the sequence is PRLFRIQINPEQIGLVIGPGGKTIRSITEQTGAKIDIEDTGAVTISAVDADSALRAKSII. Positions 631–699 constitute an S1 motif domain; sequence GDVYIGKVTR…QKGRVNLTRK (69 aa).

The protein belongs to the polyribonucleotide nucleotidyltransferase family. Mg(2+) serves as cofactor.

The protein localises to the cytoplasm. It catalyses the reaction RNA(n+1) + phosphate = RNA(n) + a ribonucleoside 5'-diphosphate. Involved in mRNA degradation. Catalyzes the phosphorolysis of single-stranded polyribonucleotides processively in the 3'- to 5'-direction. The polypeptide is Polyribonucleotide nucleotidyltransferase (Synechococcus sp. (strain ATCC 27144 / PCC 6301 / SAUG 1402/1) (Anacystis nidulans)).